The primary structure comprises 323 residues: MFTSNGSCGPATALDNLSKRVGQDRTLENDHVARFRDQNSSQNRAFRAESSFNTTAGAEFGQFQNTSVQRNYFPSAELIRKNTRFGDNWSSEFRQQQENNKWVEDFGAMNLENVRMEQEQSFQTMDQRTNMQAMSSTANAWTQEFNHMQHNKEMEYEMRIRETQRLVNAPAREVFSMVNQHSQQHNQNFTHNQTQLGDQSHYMTNLAFERQFETVQNEIDGMDMFSDSEQVEQQKELQKEDDNNDIETTKFAEIAQQVFNQMNNVDTTVSQNTEHKFKQSNFLRLMDKVAQREVEINGSGDRFIDKTGNDIRDYLPDPLSDLR.

A Glycyl cysteine thioester (Cys-Gly) (interchain with G-Cter in ubiquitin) cross-link involves residue cysteine 8. Lysine 19 participates in a covalent cross-link: Glycyl lysine isopeptide (Lys-Gly) (interchain with G-Cter in ubiquitin). Short sequence motifs (wxxxF/Y motif) lie at residues 89–93 (WSSEF), 102–105 (WVED), and 141–145 (WTQEF).

It belongs to the peroxisomal targeting signal receptor family. In terms of assembly, interacts (via WxxxF/Y and LVxEF motifs) with PEX14; promoting translocation through the PEX13-PEX14 docking complex. Interacts with PEX7. Post-translationally, monoubiquitinated at Cys-8 by PEX2 during PEX20 passage through the PEX2-PEX10-PEX12 retrotranslocation channel: monoubiquitination acts as a signal for PEX20 extraction and is required for proper export from peroxisomes and recycling. When PEX5 recycling is compromised, polyubiquitinated at Lys-19 by PEX10 during its passage through the retrotranslocation channel, leading to its degradation.

The protein localises to the cytoplasm. It is found in the cytosol. It localises to the peroxisome matrix. Coreceptor required for the peroxisomal import of proteins containing a C-terminal PTS2-type peroxisomal targeting signal, such as 3-oxoacyl-CoA thiolase. Acts via its interaction with PEX7, promoting association between PEX7 bound to cargo proteins and the PEX13-PEX14 docking complex. PEX20 along with PEX7 and PTS2-containing cargo proteins are tranlocated into peroxisomes by passing through the PEX13-PEX14 docking complex. PEX20 coreceptor is then retrotranslocated into the cytosol, leading to release of bound cargo in the peroxisome matrix, and reset for a subsequent peroxisome import cycle. Also mediates peroxisomal import of proteins that do not contain PTS1- or PTS2-type peroxisomal targeting signals, such as acyl-CoA oxidases (Aox) izozymes. Import of acyl-CoA oxidases (Aox) izozymes is independent of PEX7. Required for PEX7 ubiquitination. The protein is Peroxisome biogenesis protein 20 of Komagataella pastoris (Yeast).